A 579-amino-acid chain; its full sequence is Fatty-acid amide hydrolase 1 (579 aa).

The chain crosses the membrane as a helical span at residues 9–29 (TLSGVSGVCLACSLLSAAVVL). Over 30–403 (RWTGRQKARG…GDFVDPCLGD (374 aa)) the chain is Cytoplasmic. Lys-142 functions as the Charge relay system in the catalytic mechanism. Substrate contacts are provided by residues Met-191, Ser-217, and 238–241 (IGGS). Catalysis depends on Ser-217, which acts as the Charge relay system. The Acyl-ester intermediate role is filled by Ser-241. Position 241 is a phosphoserine (Ser-241). Residues 404-433 (LILILRLPSWFKRLLSLLLKPLFPRLAAFL) lie within the membrane without spanning it. The Cytoplasmic portion of the chain corresponds to 434 to 579 (NSMRPRSAEK…QLMTPQKQPS (146 aa)).

The protein belongs to the amidase family. As to quaternary structure, homodimer. Found in neuronal cells throughout the CNS. Expressed in liver and brain, and to a lesser extent in spleen, lung, kidney and testes.

Its subcellular location is the endoplasmic reticulum membrane. The protein resides in the golgi apparatus membrane. The catalysed reaction is N-(5Z,8Z,11Z,14Z-eicosatetraenoyl)-ethanolamine + H2O = ethanolamine + (5Z,8Z,11Z,14Z)-eicosatetraenoate. It carries out the reaction (9Z)-octadecenamide + H2O = (9Z)-octadecenoate + NH4(+). The enzyme catalyses 2-(5Z,8Z,11Z,14Z-eicosatetraenoyl)-glycerol + H2O = glycerol + (5Z,8Z,11Z,14Z)-eicosatetraenoate + H(+). It catalyses the reaction (9Z,12Z,15Z)-octadecatrienamide + H2O = (9Z,12Z,15Z)-octadecatrienoate + NH4(+). The catalysed reaction is (5Z,8Z,11Z,14Z)-eicosatetraenamide + H2O = (5Z,8Z,11Z,14Z)-eicosatetraenoate + NH4(+). It carries out the reaction (6Z)-octadecenamide + H2O = (6Z)-octadecenoate + NH4(+). The enzyme catalyses (15Z)-tetracosenamide + H2O = (15Z)-tetracosenoate + NH4(+). It catalyses the reaction (8Z,11Z,14Z)-eicosatrienamide + H2O = (8Z,11Z,14Z)-eicosatrienoate + NH4(+). The catalysed reaction is (11Z,14Z,17Z)-eicosatrienamide + H2O = (11Z,14Z,17Z)-eicosatrienoate + NH4(+). It carries out the reaction (11Z,14Z)-eicosadienamide + H2O = (11Z,14Z)-eicosadienoate + NH4(+). The enzyme catalyses (9Z,12Z)-octadecadienamide + H2O = (9Z,12Z)-octadecadienoate + NH4(+). It catalyses the reaction tetradecamide + H2O = tetradecanoate + NH4(+). The catalysed reaction is N-(9Z-octadecenoyl) ethanolamine + H2O = ethanolamine + (9Z)-octadecenoate. It carries out the reaction N-(9Z-octadecenoyl)-taurine + H2O = taurine + (9Z)-octadecenoate. The enzyme catalyses 1-O-methyl-(5Z,8Z,11Z,14Z)-eicosatetraenoate + H2O = methanol + (5Z,8Z,11Z,14Z)-eicosatetraenoate + H(+). It catalyses the reaction (11Z)-eicosenamide + H2O = (11Z)-eicosenoate + NH4(+). The catalysed reaction is N-(9Z-hexadecenoyl) ethanolamine + H2O = (9Z)-hexadecenoate + ethanolamine. It carries out the reaction N-octadecanoyl ethanolamine + H2O = octadecanoate + ethanolamine. The enzyme catalyses N-docosanoyl-ethanolamine + H2O = docosanoate + ethanolamine. It catalyses the reaction N-tetracosanoyl-taurine + H2O = tetracosanoate + taurine. The catalysed reaction is N-(15Z-tetracosenoyl)-ethanolamine + H2O = (15Z)-tetracosenoate + ethanolamine. It carries out the reaction N-docosanoyl-taurine + H2O = docosanoate + taurine. The enzyme catalyses N-(15Z-tetracosenoyl)-taurine + H2O = (15Z)-tetracosenoate + taurine. It catalyses the reaction N-tricosanoyl-taurine + H2O = tricosanoate + taurine. The catalysed reaction is (9Z)-octadecenoate + glycine = N-(9Z-octadecenoyl)glycine + H2O. It carries out the reaction N-(5Z,8Z,11Z,14Z)-eicosatetraenoyl-glycine + H2O = (5Z,8Z,11Z,14Z)-eicosatetraenoate + glycine. The enzyme catalyses N-(5Z,8Z,11Z,14Z-eicosatetraenoyl)-L-serine + H2O = (5Z,8Z,11Z,14Z)-eicosatetraenoate + L-serine. Inhibited by trifluoromethyl ketone. In terms of biological role, catalyzes the hydrolysis of endogenous amidated lipids like the sleep-inducing lipid oleamide ((9Z)-octadecenamide), the endocannabinoid anandamide (N-(5Z,8Z,11Z,14Z-eicosatetraenoyl)-ethanolamine), as well as other fatty amides, to their corresponding fatty acids, thereby regulating the signaling functions of these molecules. Hydrolyzes polyunsaturated substrate anandamide preferentially as compared to monounsaturated substrates. It can also catalyze the hydrolysis of the endocannabinoid 2-arachidonoylglycerol (2-(5Z,8Z,11Z,14Z-eicosatetraenoyl)-glycerol). FAAH cooperates with PM20D1 in the hydrolysis of amino acid-conjugated fatty acids such as N-fatty acyl glycine and N-fatty acyl-L-serine, thereby acting as a physiological regulator of specific subsets of intracellular, but not of extracellular, N-fatty acyl amino acids. The polypeptide is Fatty-acid amide hydrolase 1 (Faah) (Rattus norvegicus (Rat)).